A 65-amino-acid chain; its full sequence is Large ribosomal subunit protein bL33 (65 aa).

A disordered region spans residues serine 17 to arginine 40.

Belongs to the bacterial ribosomal protein bL33 family.

This Prochlorococcus marinus (strain NATL1A) protein is Large ribosomal subunit protein bL33.